Here is a 4574-residue protein sequence, read N- to C-terminus: MMCAAAAAGAGGSGILSSSSHSMGLGVRVIPGAGNDFAPIGSGMGSCPVVGARSDCRSRYQLLLSGRALAERYRRIYTTAINDKEQGLNLGRGKKALSKKKLKRRQKVKSKVKTRTKTDTLDGAFPVPDIKLHSNPSAFNVYCNVRHCVLDWQQKEAALALASRNSVQSGDSDSEEEEEYREPFVKLPKIIGIGLCGVFELIKETRFSHPSLCLRSLQALLDMLQGQQPESFQTEPPDVLESLFHLLLETTVRSTGMNDPTGQTLTALSCACLFSLVVAWGDTGKTLQAVSAILTNNGSHACQTIQVPTILNALQRSVQAVLVGKIQIQEWFGNGIKRAALMNKWVLKEVNIDDDEHCLLQTDGSFLYLLCKDGLYKVGSGYSGTVRGHVYNSTSRIRNRKEKRSWLGFAQGCLLYRDMNSHNMAAIKINPETLEQEGTITVPGLQADGQNIIFTDGEYINQIAACKDDGFVVRIYATSSDPALQQELQLKLARKCLHACGISLFDLEKDLHIISTGFDEEAALIGAGREFALMKTASGKIYYTGKYQSLGIKQGGPSSGKWVELPVTKSPKIVQFSVGHDGSHALLVAEDGSVFFTGSASKGEDGESTKSRRQPKPYKPKKMIKLETKMAVYTACNNGSSSIVTKDGELYMFGKDAIYSDSTCQVSDLKGHFVTQVAMGKAHTCVLTKSGEVWTFGVNNKGQCGRDTGAMSQAGKAFGVENMATAMDEDLEDELDEKEEKSMMCQPGMHKWKLDQCMVCTVCGDCTGYGASCVSSGRPDRVPGGICGCGSGESGCSSCGCCKACARELDGQEARQRGIFDAVKEMIPLDLLLGVNIEEHIQIRQEEKRQRINRRHRLEEGRGPLVFPGPLFMNQREQVLARLRPLQAVKLMREKLKDGSSERGDKDASKITTYPPGAVRFDCELRAVQVSCGFHHSVVLMENGDVYTFGYGQHGQLGHGDVNSRGSPTLVQALPGPSTQVTAGSNHTAVLLMDGQVFTFGSFSKGQLGRPILDMPYWNAKPSPMPNIGAKYGRKATWIGASGDQTFLRIDEALINSHVLATSEIFANKHIIGLVPTSISEPPPFKCLLINKLDGSCRTFNDSEQEDLQGFGLCLDPVYDVIWRFLPVTREMCCYNAVIADARVPTASDIQALCSILSPELALPSGSHASTTRSHGALHILGCLDTLAAMQELKMGVASAEEETQAVMKVYSKEDYSVVNRFESHGGGWGYSAHSVEAIRFCADADILLGGLGLFGGRGEYTAKIKLFELGPDGGDHETDGDLLAETDVLAYDCAAREKYAMMFDEPVLLQLGWWYVAWARVSGPSSDCGSHGQATITTDDGVVFQFKSSKKSNNGTDVNAGQIPQLLYRLPSNDGNASKGKQQTSEPVHILKRTFARTVSVDCFESLLSILHWSWTTLVLGVEELRGLKGFQFTATLLDLERLRFVGTCCLRLLRVYICDIFPISASTKAIVEESSKLAECVGKTRSLLKKILSEGMDNCLTKLDNDPQGYLSQPLTLLEAVLQECHNTFTACFHSFYPTPALQWACLCDLLNCLDQDIQEANFRTSSSRLLAAVMSALCNTSVKLTSILPIAYDGEVLLRSLVKQVSTENDSALAHRFPLLVAHMEKLSHTEENLMGMTTFREVLEKMLVIVVLPVRKSLRKEVELFSPHLVSNTCGLLASIVSELTASALGSEVDGLNSLHSVKATPNRFTKTSQGRSWNTGNGSPDAICFTVDKPGVVLVGFCVYGGGGIHEYELEVLADDAQTEHPGDSAHSHRWTSLELVKGTYCTDDSPSDIAEIRLDKAVPLKENVKYAVRLRNYGSRTANGDGGITTVQCSDGVAFTFSTCSLSSNGTNQTRGQIPQILYYRSEYDGDLQSQLLSKANEEDKNCSRALSVVSVVVRAAKDLLHRAFAVDVEDIPELLSSSSLFSMLLPLILAYIGPVAASVPKAAVEVFGLVQELLPAVSALNQKYAPPTFNPNQSTDSTTGNQPEQGLSACTTSNHYAVLESDHPYKQAGVTQYKVSFPDCVRWMTVEFDPQCGTAQPEDVLRLLIPSRSLHFSGLSSKALAHETINSWTELKKFSGSSGWPTAVLVLPGNEALFSLETASDYVKDEKASFYGFKCVAVGYEFNPGLDEGIIQLEKELAYLGSVCAAALMKKDLALPIGNELEEDLEILEEASLQVCKSHSGLLGKGLALSHSPTILEALEGNLPLHLQTNEHSFLEDFITCVQSSSGGRLARWLQPDSYADPQKTSLILNKDDIRCGWPTTVVVQTKDQYGDVVHVPNMKVEVKAVPVSQKKSIQQENMKKLQRLPGTSSNSATGTDLTFGGHPAPKLEATYEPMIIKEARYIAITMMKAYENYSFEELRFASPTPKRPSENMLIRANTDGTYSANWTPGAVGLYTIHVTIDGIEIDAGLEVEVKDPPKGMIPPGTQMVKPKAEPQPSKVRKFVAKDSAGLRVRSHPSLQSEQIGIVQVNGTITFIDEIHNDDGVWLRLNDETVKKYVPNMNGYTEAWCLSFNQHLGRSLLVPVDVINSEGTWVQLDKNSVVEFCESDEGEAWSLARDRGGNQYLRHVEEQAVLEHGAQTPPPSPFSVQAFNRGMASSGAQGFDYGISNNKGDRDNMASWSVSPGSKHRQESRSSKTDSHSNRSVDQVKSKNNESLSASEALILKSDTGKLRSDSHSRSHSPNHNTLQALKADGRTSGLRAESPNPGSRSSSPKQKTFTSGRSSPSSTSSPRSSSPHDKNLPAKVSPSKVHLDPPRERSKSDSYTLDPDTLRKKKVPLMEPLRGRSTSPKPKLPPKESKGGSSNAENRAPSPHVVQENLHSEVVEVCRSSALLSNDEGNDENSELHNAEEGSSKVHFSIGKAPVKEELESRSSPKVSRKTSSRHVRPKKDKSGPLFKGENVRPTEPAKQAMSPSVAECARAVFAAFLWHEGIVHDAMACSSFLKFNPELTKEHAPIRNSLSCQQGFDEKESKLKNRHSLEISSALNMFNISPHGPDISKMGSINKNKVLSMLKEPPLPEKCEDGKESVSYEMTSHSSMRSKSILPLTLQHLVAFWEDISMATIKAATQNMIFPSPGSSAILKKKENEKDSKKTKKEKKKKEKAEVRPRGNLFGEMAQLAMGGPEKDTICELCGESHPYPVTYHMRQAHPGCGRYAGGQGYNSIGHFCGGWAGNCGDGGIGGSTWYLVCDRCREKYLREKQTAAREKVKQSRKKPLQVKTPRALPTMEAHQVIRANALFLLSLSSAAEPSLLCHHPPKPFHSHLPSLKEGVSEELPNKMGCLYLQTLARQHTENFGVYQDDNLFQDEMRYLRSTSVPAPYISVTPDACPNVFEEPGSNMKSMPPSLETSPITDSDTAKRTVFQRSYSVVASEYDKQHSASPARVKAVPRRRVHSGDAEVGSSLLRHPSPELSRLISAHGSLSKGERNFQWPVLAFVIQHHDLEGLEVAMKHALRKSACRVFAMEAFNWLLCNVTQTTSLHDILWHFVASLTPSPFETEEEEDEENKGNKENLEQEKDLGVCEHPLSDIIIAGEAAHPLPHTFHCLLQTISDLMMSLPSGSSLQQMALRCWSLKFKQSDHQFLHQSNVFHHINNILSKSDDGDSEESFNISVQSGYEAISQELCVVTCLKDLTSVVDIKTSSRPAMIGSLTDGSTETFWESGDEDKNKTKSITISCVKGINASYVSVHVDNSRDIGNKVTSMIFLCGKAVEDLCRIKQIDLDSRHMGWVTSELPGGDHHVIKIELKGPENTLRVRQVKVLGWKEGESIKIAGQISASVAQQKNCEAETLRVFRLITSQVFGKLICGDAEPTPEQEEKNLLSSPEGEDKAPSDADLKEHMVGIIFSRSKLTNLQKQVCAHIVQAIRMEATRVREEWEHAISSKENANSQPSDDDASSDAYCFELLSMVLALSGSNVGRQYLAQQLTLLQDLFSLLHTASPRVQRQVTSLLRRVLPEVTPMRLASVIGVKALPPADISDIIHSTEKGDWTKLGILDMFLGCIAKALTVQLKAKGTTIVGTAGMAAGKGVTTVTLPMIFNSSYIRRGESHWWMKGSTPPQIAEIIIKLVKDMAAGHLSDAWSRVTKNAIAETIIALTKMEEEHRSPVRCIATTRLWLALASLCVLDQDHVDRLSSGRWMGKDGQQKQMPMCDNHDDGETAAIILCNACGNLCTDCDRFLHLHRRTRTHQRQVFKEEEEAIKVDLHEGCGRTKLFWLMALADSKTMKAMVEFREHTGKPASSSSDACRFCGTRHGTELSAVGSVCSDQDCQEYAKLACSKTHPCGHPCGGVKNEDLCLPCLHGCDKTATCLKQDADDMCMICFTEALSAAPAIQLDCSHVFHLQCTRRVLENRWLGPRITFGFMSCPICKNKINHLVLKDLLDPIKELYEDVRRKALMRLEYEGLHKSEAITMSGARFFNNPAGFAMNRYAYYVCFKCKKAYFGGEARCDAEAGQGDDYDPRELICGACSDVSRAQMCSKHGTDFLEYKCRYCCSVAVFFCFGTTHFCNACHDDFQRMTSVPKEELPHCPAGPKGKQLEGSECPLHVVHPPTGEEFALGCGVCRNAHTF.

Disordered stretches follow at residues 92-115 and 599-620; these read RGKK…VKTR and SASK…PYKP. 4 RCC1 repeats span residues 591–646, 690–746, 943–993, and 995–1051; these read DGSV…IVTK, SGEV…MMCQ, NGDV…VLLM, and GQVF…LRID. A compositionally biased stretch (basic residues) spans 611 to 620; that stretch reads SRRQPKPYKP. A disulfide bridge connects residues Cys-1733 and Cys-1850. 2 disordered regions span residues 1976 to 1998 and 2313 to 2332; these read APPT…EQGL and LQRL…LTFG. Polar residues-rich tracts occupy residues 1981-1998 and 2317-2328; these read NPNQ…EQGL and PGTSSNSATGTD. The stretch at 2336 to 2417 is one Filamin repeat; sequence APKLEATYEP…IHVTIDGIEI (82 aa). Disordered regions lie at residues 2613 to 2824, 2845 to 2922, 3085 to 3116, 3345 to 3365, and 3505 to 3526; these read GFDY…PSPH, SNDE…KQAM, SPGS…KAEV, PGSN…TDSD, and FETE…EQEK. Composition is skewed to basic and acidic residues over residues 2639–2663 and 2678–2688; these read HRQE…KSKN and DTGKLRSDSHS. Positions 2716–2729 are enriched in polar residues; it reads NPGSRSSSPKQKTF. Residues 2730-2745 show a composition bias toward low complexity; it reads TSGRSSPSSTSSPRSS. Composition is skewed to basic and acidic residues over residues 2761–2772, 2854–2864, and 2874–2883; these read VHLDPPRERSKS, SELHNAEEGSS, and PVKEELESRS. Composition is skewed to basic residues over residues 2887-2900 and 3102-3111; these read VSRK…RPKK and KKTKKEKKKK. Positions 3515–3526 are enriched in basic and acidic residues; sequence NKGNKENLEQEK. A DOC domain is found at 3617–3795; it reads FNISVQSGYE…SVAQQKNCEA (179 aa). The segment at 3815-3841 is disordered; the sequence is GDAEPTPEQEEKNLLSSPEGEDKAPSD. Positions 4324, 4327, 4342, 4344, 4347, 4350, 4371, 4374, 4440, and 4443 each coordinate Zn(2+). The RING-type; atypical zinc-finger motif lies at 4324-4375; sequence CMICFTEALSAAPAIQLDCSHVFHLQCTRRVLENRWLGPRITFGFMSCPICK. The tract at residues 4435–4572 is tandem cysteine domain; it reads YAYYVCFKCK…LGCGVCRNAH (138 aa). The active site involves Cys-4454. Zn(2+) is bound by residues Cys-4471, Cys-4474, Cys-4483, His-4486, Cys-4495, Cys-4498, and Cys-4499. The active site involves Cys-4506. 7 residues coordinate Zn(2+): Cys-4513, Cys-4516, Cys-4534, Cys-4548, His-4554, Cys-4565, and Cys-4568.

This sequence belongs to the RING-Cys relay (RCR) family. Widely expressed when the visual system begins developing. In the eye, expressed in all cells, including retinal ganglion cells, with no obvious gradient.

Its subcellular location is the nucleus. It localises to the cell projection. The protein localises to the axon. The protein resides in the cytoplasm. It is found in the cytoskeleton. It catalyses the reaction [E2 ubiquitin-conjugating enzyme]-S-ubiquitinyl-L-cysteine + [acceptor protein]-L-threonine = [E2 ubiquitin-conjugating enzyme]-L-cysteine + [acceptor protein]-3-O-ubiquitinyl-L-threonine.. It functions in the pathway protein modification; protein ubiquitination. Functionally, atypical E3 ubiquitin-protein ligase which specifically mediates ubiquitination of threonine and serine residues on target proteins, instead of ubiquitinating lysine residues. Shows esterification activity towards both threonine and serine, with a preference for threonine, and acts via two essential catalytic cysteine residues that relay ubiquitin to its substrate via thioester intermediates. Interacts with the E2 enzymes UBE2D1, UBE2D3, UBE2E1 and UBE2L3. Plays a key role in neural development, probably by mediating ubiquitination of threonine residues on target proteins. Involved in different processes such as regulation of neurite outgrowth, synaptic growth, synaptogenesis and axon degeneration. Required in the visual system for correct fasciculation, targeting and mapping of retinal axons. Acts as a regulator of pteridine synthesis. May play a role in the regulation of the circadian clock gene expression. This chain is E3 ubiquitin-protein ligase MYCBP2, found in Danio rerio (Zebrafish).